The primary structure comprises 465 residues: 3-isopropylmalate dehydratase large subunit (465 aa).

[4Fe-4S] cluster-binding residues include cysteine 347, cysteine 407, and cysteine 410.

The protein belongs to the aconitase/IPM isomerase family. LeuC type 1 subfamily. As to quaternary structure, heterodimer of LeuC and LeuD. It depends on [4Fe-4S] cluster as a cofactor.

The enzyme catalyses (2R,3S)-3-isopropylmalate = (2S)-2-isopropylmalate. It functions in the pathway amino-acid biosynthesis; L-leucine biosynthesis; L-leucine from 3-methyl-2-oxobutanoate: step 2/4. Its function is as follows. Catalyzes the isomerization between 2-isopropylmalate and 3-isopropylmalate, via the formation of 2-isopropylmaleate. The chain is 3-isopropylmalate dehydratase large subunit from Aeromonas salmonicida (strain A449).